A 56-amino-acid chain; its full sequence is Large ribosomal subunit protein bL32c (56 aa).

This sequence belongs to the bacterial ribosomal protein bL32 family.

It localises to the plastid. Its subcellular location is the chloroplast. The sequence is that of Large ribosomal subunit protein bL32c from Huperzia lucidula (Shining clubmoss).